The sequence spans 405 residues: Elongation factor Tu (405 aa).

Positions 10–215 (KPHVNVGTIG…AVDSYIPTPE (206 aa)) constitute a tr-type G domain. The G1 stretch occupies residues 19–26 (GHVDHGKT). 19–26 (GHVDHGKT) contributes to the GTP binding site. Residue Thr26 coordinates Mg(2+). The G2 stretch occupies residues 61-65 (GITIN). The interval 82–85 (DCPG) is G3. GTP is bound by residues 82 to 86 (DCPGH) and 137 to 140 (NKVD). A G4 region spans residues 137–140 (NKVD). The segment at 175-177 (SAL) is G5.

It belongs to the TRAFAC class translation factor GTPase superfamily. Classic translation factor GTPase family. EF-Tu/EF-1A subfamily. Monomer.

It localises to the cytoplasm. It carries out the reaction GTP + H2O = GDP + phosphate + H(+). Its function is as follows. GTP hydrolase that promotes the GTP-dependent binding of aminoacyl-tRNA to the A-site of ribosomes during protein biosynthesis. The sequence is that of Elongation factor Tu from Deinonema sp.